A 510-amino-acid polypeptide reads, in one-letter code: MGNPLQISIFLVFCIFIQSSACGQGVGTEPFGRSLGATEASKPLKKPETRFLLFQDENDRLGCRLRPQHPETLQECGFNSSQPLIMIIHGWSVDGLLENWIWKIVSALKSRQSQPVNVGLVDWISLAYQHYTIAVQNTRIVGQDVAALLLWLEESAKFSRSKVHLIGYSLGAHVSGFAGSSMDGKNKIGRITGLDPAGPMFEGTSPNERLSPDDANFVDAIHTFTREHMGLSVGIKQPIAHYDFYPNGGSFQPGCHFLELYKHIAEHGLNAITQTIKCAHERSVHLFIDSLQHSDLQSIGFQCSDMGSFSQGLCLSCKKGRCNTLGYDIRKDRSGKSKRLFLITRAQSPFKVYHYQFKIQFINQIEKPVEPTFTMSLLGTKEEIKRIPITLGEGITSNKTYSFLITLDKDIGELILLKFKWENSAVWANVWNTVQTIMLWGIEPHHSGLILKTIWVKAGETQQRMTFCPENLDDLQLHPSQEKVFVNCEVKSKRLTESKEQMSQETHAKK.

The signal sequence occupies residues 1-21 (MGNPLQISIFLVFCIFIQSSA). An N-linked (GlcNAc...) asparagine glycan is attached at Asn-79. Catalysis depends on Ser-169, which acts as the Nucleophile. Residue Asp-195 is the Charge relay system of the active site. The tract at residues 255 to 278 (CHFLELYKHIAEHGLNAITQTIKC) is essential for determining substrate specificity. His-280 functions as the Charge relay system in the catalytic mechanism. The region spanning 353–487 (YHYQFKIQFI…HPSQEKVFVN (135 aa)) is the PLAT domain. Asn-398 carries an N-linked (GlcNAc...) asparagine glycan.

This sequence belongs to the AB hydrolase superfamily. Lipase family. As to quaternary structure, homodimer.

It is found in the secreted. It catalyses the reaction a triacylglycerol + H2O = a diacylglycerol + a fatty acid + H(+). It carries out the reaction a 1-acyl-sn-glycero-3-phosphocholine + H2O = sn-glycerol 3-phosphocholine + a fatty acid + H(+). The catalysed reaction is a 1,2-diacyl-sn-glycero-3-phosphocholine + H2O = a 2-acyl-sn-glycero-3-phosphocholine + a fatty acid + H(+). The enzyme catalyses 1,2,3-tri-(9Z-octadecenoyl)-glycerol + H2O = di-(9Z)-octadecenoylglycerol + (9Z)-octadecenoate + H(+). It catalyses the reaction 1,2-di-(9Z-octadecenoyl)-sn-glycero-3-phosphocholine + H2O = (9Z-octadecenoyl)-sn-glycero-3-phosphocholine + (9Z)-octadecenoate + H(+). It carries out the reaction 1,2,3-tributanoylglycerol + H2O = dibutanoylglycerol + butanoate + H(+). The catalysed reaction is 1,2-dihexadecanoyl-sn-glycero-3-phosphocholine + H2O = hexadecanoyl-sn-glycero-3-phosphocholine + hexadecanoate + H(+). The enzyme catalyses 1,2-di-(9Z-octadecenoyl)-sn-glycerol + H2O = 2-(9Z-octadecenoyl)-glycerol + (9Z)-octadecenoate + H(+). It catalyses the reaction 1,2,3-tri-(9Z-octadecenoyl)-glycerol + H2O = 2,3-di-(9Z)-octadecenoyl-sn-glycerol + (9Z)-octadecenoate + H(+). It carries out the reaction 1-(9Z-octadecenoyl)-sn-glycero-3-phospho-L-serine + H2O = sn-glycero-3-phospho-L-serine + (9Z)-octadecenoate + H(+). The catalysed reaction is 1-hexadecanoyl-sn-glycero-3-phosphocholine + H2O = sn-glycerol 3-phosphocholine + hexadecanoate + H(+). The enzyme catalyses 1,3-di-(9Z-octadecenoyl)-glycerol + H2O = 3-(9Z-octadecenoyl)-sn-glycerol + (9Z)-octadecenoate + H(+). In terms of biological role, catalyzes the hydrolysis of triglycerides and phospholipids present in circulating plasma lipoproteins, including chylomicrons, intermediate density lipoproteins (IDL), low density lipoproteins (LDL) of large size and high density lipoproteins (HDL), releasing free fatty acids (FFA) and smaller lipoprotein particles. Also exhibits lysophospholipase activity. Can hydrolyze both neutral lipid and phospholipid substrates but shows a greater binding affinity for neutral lipid substrates than phospholipid substrates. In native LDL, preferentially hydrolyzes the phosphatidylcholine species containing polyunsaturated fatty acids at sn-2 position. This chain is Hepatic triacylglycerol lipase (Lipc), found in Mus musculus (Mouse).